The chain runs to 99 residues: NADH-ubiquinone oxidoreductase chain 4L (99 aa).

The next 3 membrane-spanning stretches (helical) occupy residues 4-24 (MFLM…VFVS), 29-49 (LLST…FLFF), and 63-83 (FFLT…VSMI).

This sequence belongs to the complex I subunit 4L family.

The protein resides in the mitochondrion membrane. The catalysed reaction is a ubiquinone + NADH + 5 H(+)(in) = a ubiquinol + NAD(+) + 4 H(+)(out). Functionally, core subunit of the mitochondrial membrane respiratory chain NADH dehydrogenase (Complex I) that is believed to belong to the minimal assembly required for catalysis. Complex I functions in the transfer of electrons from NADH to the respiratory chain. The immediate electron acceptor for the enzyme is believed to be ubiquinone. The sequence is that of NADH-ubiquinone oxidoreductase chain 4L (mt:ND4L) from Anopheles gambiae (African malaria mosquito).